A 579-amino-acid polypeptide reads, in one-letter code: Potassium-transporting ATPase potassium-binding subunit (579 aa).

10 helical membrane passes run 2-22 (MNLVLQYGLYILILVVLAIPL), 66-86 (SFSVLAFSIISLIVLFLIHIF), 135-155 (GLTVQNFVSAAVGISVLFALI), 177-197 (VLYILIPLSIVVSLALVSQGV), 262-282 (LSNLFEMISLLLIPVALCFTF), 292-312 (GIAIFIAMGIMLVVAMGIIGV), 391-411 (VFGGVGCGLYGMIGFAILAVF), 437-457 (VLVCLATPIAILIGSGIASIL), 490-510 (FAGFAANTPFINISIGLSMLF), and 546-566 (FIGLLIFVVLLIGALSFFPAL).

It belongs to the KdpA family. The system is composed of three essential subunits: KdpA, KdpB and KdpC.

It is found in the cell membrane. Functionally, part of the high-affinity ATP-driven potassium transport (or Kdp) system, which catalyzes the hydrolysis of ATP coupled with the electrogenic transport of potassium into the cytoplasm. This subunit binds the extracellular potassium ions and delivers the ions to the membrane domain of KdpB through an intramembrane tunnel. The polypeptide is Potassium-transporting ATPase potassium-binding subunit (Clostridium botulinum (strain Alaska E43 / Type E3)).